A 116-amino-acid chain; its full sequence is MPRSVNHVASKARRKKILKLTRGYFGARKNVWTVAKNTWEKGLTYAFRDRRNKKRNFRALWIQRINAAARLEGMSYSKLMGGLHKAGIEINRKVLADLAVNHPEAFKAVVAKAKVA.

This sequence belongs to the bacterial ribosomal protein bL20 family.

Functionally, binds directly to 23S ribosomal RNA and is necessary for the in vitro assembly process of the 50S ribosomal subunit. It is not involved in the protein synthesizing functions of that subunit. The chain is Large ribosomal subunit protein bL20 from Bacteroides fragilis (strain ATCC 25285 / DSM 2151 / CCUG 4856 / JCM 11019 / LMG 10263 / NCTC 9343 / Onslow / VPI 2553 / EN-2).